The primary structure comprises 1060 residues: Histone lysine demethylase PHF8 (1060 aa).

Residues 41–92 (PVYCLCRLPYDVTRFMIECDMCQDWFHGSCVGVEEEKAADIDLYHCPNCEVL) form a PHD-type zinc finger. Serine 69 bears the Phosphoserine; by CDK1 mark. Residues 100 to 120 (KRRGSSKGHDTHKGKPVKTGS) are disordered. The tract at residues 101-115 (RRGSSKGHDTHKGKP) is linker. Residue serine 120 is modified to Phosphoserine; by CDK1. A JmjC domain is found at 231–387 (FSDTRLSNLV…MQLKAYEIEK (157 aa)). Threonine 280 contacts substrate. Fe cation contacts are provided by histidine 283 and aspartate 285. Lysine 300 contacts substrate. Histidine 355 serves as a coordination point for Fe cation. Over residues 508-517 (AHSTSVSMSR) the composition is skewed to polar residues. Residues 508–534 (AHSTSVSMSRLSLPSKNGSKKKGLKPK) are disordered. The residue at position 651 (serine 651) is a Phosphoserine. At tyrosine 704 the chain carries Phosphotyrosine. Threonine 705 and threonine 706 each carry phosphothreonine. Residue serine 722 is modified to Phosphoserine. 3 disordered regions span residues 768 to 840 (QSSS…EQDS), 852 to 902 (YPSL…GTRV), and 915 to 1046 (KLAQ…KQRL). Composition is skewed to low complexity over residues 769-778 (SSSSSPATSS) and 785-804 (GGQDRSSGSSSSGLGTVSNS). Phosphoserine occurs at positions 804, 826, 834, 854, 857, and 880. The span at 826–839 (SEEEEENASLDEQD) shows a compositional bias: acidic residues. A compositionally biased stretch (basic and acidic residues) spans 891-900 (KQDRPVREGT). Basic residues predominate over residues 924–934 (AQKKKYIKKKP). The span at 1018-1030 (RRPSVGSQSNQAG) shows a compositional bias: polar residues.

This sequence belongs to the JHDM1 histone demethylase family. JHDM1D subfamily. Interacts with POLR1B, UBTF, SETD1A, HCFC1, E2F1 and ZNF711. Interacts with ZNF263; recruited to the SIX3 promoter along with other proteins involved in chromatin modification and transcriptional corepression where it contributes to transcriptional repression. Requires Fe(2+) as cofactor. Post-translationally, phosphorylation at Ser-69 and Ser-120 are required for dissociation from chromatin and accumulation of H4K20Me1 levels during prophase.

The protein localises to the nucleus. Its subcellular location is the nucleolus. The catalysed reaction is N(6),N(6)-dimethyl-L-lysyl(36)-[histone H3] + 2 2-oxoglutarate + 2 O2 = L-lysyl(36)-[histone H3] + 2 formaldehyde + 2 succinate + 2 CO2. It carries out the reaction N(6),N(6)-dimethyl-L-lysyl(9)-[histone H3] + 2 2-oxoglutarate + 2 O2 = L-lysyl(9)-[histone H3] + 2 formaldehyde + 2 succinate + 2 CO2. Histone lysine demethylase with selectivity for the di- and monomethyl states that plays a key role cell cycle progression, rDNA transcription and brain development. Demethylates mono- and dimethylated histone H3 'Lys-9' residue (H3K9Me1 and H3K9Me2), dimethylated H3 'Lys-27' (H3K27Me2) and monomethylated histone H4 'Lys-20' residue (H4K20Me1). Acts as a transcription activator as H3K9Me1, H3K9Me2, H3K27Me2 and H4K20Me1 are epigenetic repressive marks. Involved in cell cycle progression by being required to control G1-S transition. Acts as a coactivator of rDNA transcription, by activating polymerase I (pol I) mediated transcription of rRNA genes. Required for brain development, probably by regulating expression of neuron-specific genes. Only has activity toward H4K20Me1 when nucleosome is used as a substrate and when not histone octamer is used as substrate. May also have weak activity toward dimethylated H3 'Lys-36' (H3K36Me2), however, the relevance of this result remains unsure in vivo. Specifically binds trimethylated 'Lys-4' of histone H3 (H3K4me3), affecting histone demethylase specificity: has weak activity toward H3K9Me2 in absence of H3K4me3, while it has high activity toward H3K9me2 when binding H3K4me3. Positively modulates transcription of histone demethylase KDM5C, acting synergistically with transcription factor ARX; synergy may be related to enrichment of histone H3K4me3 in regulatory elements. In Homo sapiens (Human), this protein is Histone lysine demethylase PHF8 (PHF8).